The chain runs to 338 residues: Large ribosomal subunit protein uL3 (338 aa).

The tract at residues 230-253 (HRKGHRRTGTIGPQAPALMFTQPR) is disordered.

Belongs to the universal ribosomal protein uL3 family. Part of the 50S ribosomal subunit. Forms a cluster with proteins L14 and L24e.

Functionally, one of the primary rRNA binding proteins, it binds directly near the 3'-end of the 23S rRNA, where it nucleates assembly of the 50S subunit. The sequence is that of Large ribosomal subunit protein uL3 from Pyrobaculum neutrophilum (strain DSM 2338 / JCM 9278 / NBRC 100436 / V24Sta) (Thermoproteus neutrophilus).